We begin with the raw amino-acid sequence, 141 residues long: ATP synthase epsilon chain (141 aa).

Belongs to the ATPase epsilon chain family. In terms of assembly, F-type ATPases have 2 components, CF(1) - the catalytic core - and CF(0) - the membrane proton channel. CF(1) has five subunits: alpha(3), beta(3), gamma(1), delta(1), epsilon(1). CF(0) has three main subunits: a, b and c.

It localises to the cell membrane. Its function is as follows. Produces ATP from ADP in the presence of a proton gradient across the membrane. In Lactococcus lactis subsp. cremoris (strain SK11), this protein is ATP synthase epsilon chain.